The following is a 309-amino-acid chain: Taste receptor type 2 member 113 (309 aa).

At 1–8 the chain is on the extracellular side; sequence MVAVLQST. The chain crosses the membrane as a helical span at residues 9–29; it reads FAIIFSMEFIVGTLGNGFIIL. The Cytoplasmic segment spans residues 30–55; it reads MTCIDWVRRRKISLVDQILTALAITR. The helical transmembrane segment at 56–76 threads the bilayer; it reads ITLILLVFIDWWVSVLFPALH. Residues 77–101 lie on the Extracellular side of the membrane; the sequence is ETGKILRMYFISWTVINHCNLWLTA. Residues 102-122 traverse the membrane as a helical segment; it reads SLSIIYFLKIASFSSIIFLYL. Residues 123–127 are Cytoplasmic-facing; sequence KFRVK. Residues 128–148 form a helical membrane-spanning segment; sequence NVVFVTLLVSLFFLFINTAIV. At 149–185 the chain is on the extracellular side; sequence NVYFDVCFDGVQRNVSQVSRLYNHEQICKFLSFTNPM. Residue Asn162 is glycosylated (N-linked (GlcNAc...) asparagine). Residues 186–206 traverse the membrane as a helical segment; the sequence is FAFIPFVTSMATFFLLIFSLW. At 207-229 the chain is on the cytoplasmic side; that stretch reads RHLKNMKHNAEGCRDVSTIVHIR. The helical transmembrane segment at 230 to 250 threads the bilayer; it reads ALQTIIVSVVLYSTFFLSFFV. At 251–262 the chain is on the extracellular side; that stretch reads KVWSSGSPERYL. Residues 263–283 form a helical membrane-spanning segment; that stretch reads IFLFVWALGNAVLPAHTFVLI. At 284–309 the chain is on the cytoplasmic side; sequence WGNCRLRWASLSLMLWLRYRFKNIDV.

This sequence belongs to the G-protein coupled receptor T2R family.

It localises to the membrane. Functionally, putative taste receptor which may play a role in the perception of bitterness. This is Taste receptor type 2 member 113 from Rattus norvegicus (Rat).